An 83-amino-acid chain; its full sequence is U2-hexatoxin-Hi1a (83 aa).

A signal peptide spans 1-23 (MRNTTFLVLNVMLLVSVALFCAA). Residues 24 to 45 (DPEMEKSSFAEILDTGNPEQER) constitute a propeptide that is removed on maturation. Cystine bridges form between Cys47-Cys63, Cys54-Cys68, Cys62-Cys78, and Cys70-Cys76.

It belongs to the neurotoxin 07 (Beta/delta-agtx) family. As to expression, expressed by the venom gland.

Its subcellular location is the secreted. In terms of biological role, inhibits sodium channels (Nav) of insects. The chain is U2-hexatoxin-Hi1a from Hadronyche infensa (Fraser island funnel-web spider).